A 309-amino-acid polypeptide reads, in one-letter code: MTAKTIRHYLQFKDFSLEDYEYVLERTGILKRKFKNYETYHPLHDRTLAMIFEKSSTRTRLSFEAGIFQLGGHAVFMSTRDTQLGRGEPVEDSAQVISRMVDIIMIRTFEQDVITRFAQNSRVPVINGLTNEYHPCQVLADIFTYYEHRGPIAGKTVAWVGDANNMLYTWIEAAQILGFKLRLSTPPGYALDMKLVSPDSAPFYEVFDDPNEACKGADLVTTDVWTSMGFEAENEARKQAFADWCVDEEMMGHANPDALFMHCLPAHRGEEVTAGVIDGPQSVVWDEAENRLHVQKALMEFLLLGRLKH.

Carbamoyl phosphate-binding positions include 56–59, Q83, R107, and 134–137; these read STRT and HPCQ. L-ornithine contacts are provided by residues N165, D223, and 227–228; that span reads SM. Residues 263–264 and R291 contribute to the carbamoyl phosphate site; that span reads CL.

Belongs to the aspartate/ornithine carbamoyltransferase superfamily. OTCase family.

The protein localises to the cytoplasm. It catalyses the reaction carbamoyl phosphate + L-ornithine = L-citrulline + phosphate + H(+). The protein operates within amino-acid biosynthesis; L-arginine biosynthesis; L-arginine from L-ornithine and carbamoyl phosphate: step 1/3. In terms of biological role, reversibly catalyzes the transfer of the carbamoyl group from carbamoyl phosphate (CP) to the N(epsilon) atom of ornithine (ORN) to produce L-citrulline. The chain is Ornithine carbamoyltransferase from Burkholderia cenocepacia (strain HI2424).